The chain runs to 373 residues: Chaperone protein DnaJ (373 aa).

Residues Ser-4–Gly-69 form the J domain. Residues Gly-135 to Lys-212 form a CR-type zinc finger. Zn(2+) is bound by residues Cys-148, Cys-151, Cys-164, Cys-167, Cys-186, Cys-189, Cys-200, and Cys-203. CXXCXGXG motif repeat units follow at residues Cys-148–Gly-155, Cys-164–Gly-171, Cys-186–Gly-193, and Cys-200–Gly-207.

It belongs to the DnaJ family. In terms of assembly, homodimer. Zn(2+) is required as a cofactor.

It is found in the cytoplasm. Functionally, participates actively in the response to hyperosmotic and heat shock by preventing the aggregation of stress-denatured proteins and by disaggregating proteins, also in an autonomous, DnaK-independent fashion. Unfolded proteins bind initially to DnaJ; upon interaction with the DnaJ-bound protein, DnaK hydrolyzes its bound ATP, resulting in the formation of a stable complex. GrpE releases ADP from DnaK; ATP binding to DnaK triggers the release of the substrate protein, thus completing the reaction cycle. Several rounds of ATP-dependent interactions between DnaJ, DnaK and GrpE are required for fully efficient folding. Also involved, together with DnaK and GrpE, in the DNA replication of plasmids through activation of initiation proteins. The sequence is that of Chaperone protein DnaJ from Campylobacter jejuni subsp. jejuni serotype O:2 (strain ATCC 700819 / NCTC 11168).